The primary structure comprises 312 residues: MTQAAEHITVLLHEAVEGLAIKPDGIYVDGTFGRGGHSRLILQQLGPNGRLIAIDRDPQAIAEAAKIQDPRFEIVHGPFSGIASYLDERGLLGKVDGFLLDLGVSSPQLDDAERGFSFMKDGPLDMRMDPTSGQSAAEWLARADVDDIAWVLKTFGEERFAKKIARAIVHDRVTEPYVRTRQLAEMIARVNPSKEKGKHAATRSFQAIRIYINSELDEIETALNGALQVLAPEGRLSVISFHSLEDRLVKHFIRKHEKGPEVPHGIPLTEAQLAGGRKLKSVGKALKPSEHEVNENSRSRSSVLRVAQRLAE.

Residues 35–37 (GGH), aspartate 55, phenylalanine 79, aspartate 101, and glutamine 108 contribute to the S-adenosyl-L-methionine site. Residues 286-306 (LKPSEHEVNENSRSRSSVLRV) are disordered. The span at 287-298 (KPSEHEVNENSR) shows a compositional bias: basic and acidic residues.

Belongs to the methyltransferase superfamily. RsmH family.

It is found in the cytoplasm. It catalyses the reaction cytidine(1402) in 16S rRNA + S-adenosyl-L-methionine = N(4)-methylcytidine(1402) in 16S rRNA + S-adenosyl-L-homocysteine + H(+). Its function is as follows. Specifically methylates the N4 position of cytidine in position 1402 (C1402) of 16S rRNA. The protein is Ribosomal RNA small subunit methyltransferase H of Aeromonas hydrophila subsp. hydrophila (strain ATCC 7966 / DSM 30187 / BCRC 13018 / CCUG 14551 / JCM 1027 / KCTC 2358 / NCIMB 9240 / NCTC 8049).